We begin with the raw amino-acid sequence, 297 residues long: MRVIFMGTPDFSVPALRAIAARHQVVAVYSQPPRAAGRGQKPRPSPVHRAAEELGLPVRTPERLKSPQDQGDFAALQADVAVVVAYGLILPQPVLEAPWLGCLNIHASLLPRWRGAAPIHRAIMAGDAETGVAIMQMEAGLDTGPVLAEARTTIGAEDTTADLHDRLAEMGAALIVETLHRLPLPAEPQPAEGVTYAQKIDKAEARIDWGRPAAQVDRQIRGLSPFPGAWCLIGGERVKLLRSRLAAGSGAPGRVLSGFTIACGEGAVEVLEAQREGKRPMPAAEILRGMALPDRLD.

The disordered stretch occupies residues 31–52 (QPPRAAGRGQKPRPSPVHRAAE). 108 to 111 (SLLP) is a binding site for (6S)-5,6,7,8-tetrahydrofolate.

This sequence belongs to the Fmt family.

It catalyses the reaction L-methionyl-tRNA(fMet) + (6R)-10-formyltetrahydrofolate = N-formyl-L-methionyl-tRNA(fMet) + (6S)-5,6,7,8-tetrahydrofolate + H(+). Functionally, attaches a formyl group to the free amino group of methionyl-tRNA(fMet). The formyl group appears to play a dual role in the initiator identity of N-formylmethionyl-tRNA by promoting its recognition by IF2 and preventing the misappropriation of this tRNA by the elongation apparatus. This Paracoccus denitrificans (strain Pd 1222) protein is Methionyl-tRNA formyltransferase.